The primary structure comprises 507 residues: Cyclic GMP-AMP synthase (507 aa).

The segment at 1 to 146 (MEDPRRRTTA…PRAPRGSRKE (146 aa)) is DNA-binding. Residues 1 to 151 (MEDPRRRTTA…GSRKEPDKLK (151 aa)) form a disordered region. Over residues 7–18 (RTTAPRAKKPSA) the composition is skewed to basic residues. The segment covering 44–57 (RRAERDGDTTEKPR) has biased composition (basic and acidic residues). The segment at 48-59 (RDGDTTEKPRAP) is required for association with the cell membrane. A Phosphothreonine modification is found at threonine 52. Positions 119-132 (RKVVRGPSHRRGAR) are required for activation upon DNA viral infection. The span at 121-131 (VVRGPSHRRGA) shows a compositional bias: basic residues. A Nuclear export signal motif is present at residues 154–159 (LDKLRL). At lysine 156 the chain carries N6-lactoyllysine. The interval 158-201 (RLKRKDISEAAETVNKVVERLLRRMQKRESEFKGVEQLNTGSYY) is DNA-binding. At glutamate 176 the chain carries PolyADP-ribosyl glutamic acid. Threonine 197 provides a ligand contact to GTP. Residue serine 199 coordinates ATP. Serine 199 is modified (phosphoserine). At tyrosine 201 the chain carries Phosphotyrosine. Residues glutamate 211 and aspartate 213 each contribute to the Mg(2+) site. Aspartate 213 lines the 2',3'-cGAMP pocket. Lysine 217 participates in a covalent cross-link: Glycyl lysine isopeptide (Lys-Gly) (interchain with G-Cter in SUMO). A Glycyl lysine isopeptide (Lys-Gly) (interchain with G-Cter in ubiquitin) cross-link involves residue lysine 271. Glutamate 272 carries the 5-glutamyl polyglutamate modification. Positions 281–291 (DVSVEKEKPGS) match the Nuclear localization signal motif. Residue glycine 290 participates in 2',3'-cGAMP binding. Serine 291 bears the Phosphoserine; by CDK1 and PKB mark. The residue at position 302 (glutamate 302) is a 5-glutamyl glutamate. Aspartate 307 provides a ligand contact to GTP. Aspartate 307 is a binding site for Mg(2+). Aspartate 307 contacts 2',3'-cGAMP. Positions 329-370 (QGWLGTKVRTNLRREPFYLVPKNAKDGNSFQGETWRLSFSHT) are interaction with collided ribosomes. Residue lysine 335 forms a Glycyl lysine isopeptide (Lys-Gly) (interchain with G-Cter in SUMO); alternate linkage. Lysine 335 participates in a covalent cross-link: Glycyl lysine isopeptide (Lys-Gly) (interchain with G-Cter in ubiquitin); alternate. 2',3'-cGAMP is bound by residues lysine 350 and 364–366 (RLS). 364–371 (RLSFSHTE) serves as a coordination point for GTP. ATP is bound at residue glutamate 371. Lysine 372 is covalently cross-linked (Glycyl lysine isopeptide (Lys-Gly) (interchain with G-Cter in SUMO); alternate). A Glycyl lysine isopeptide (Lys-Gly) (interchain with G-Cter in ubiquitin); alternate cross-link involves residue lysine 372. Lysine 372 carries the post-translational modification N6-acetyllysine. The DNA-binding stretch occupies residues 372–395 (KYILNNHGIEKTCCESSGAKCCRK). A Zn(2+)-binding site is contributed by histidine 378. Lysine 382 participates in a covalent cross-link: Glycyl lysine isopeptide (Lys-Gly) (interchain with G-Cter in SUMO). N6-acetyllysine is present on lysine 382. The Zn(2+) site is built by cysteine 384, cysteine 385, and cysteine 392. 2 S-palmitoyl cysteine lipidation sites follow: cysteine 392 and cysteine 393. Glycyl lysine isopeptide (Lys-Gly) (interchain with G-Cter in ubiquitin) cross-links involve residues lysine 399, lysine 402, lysine 409, and lysine 410. Residue lysine 402 participates in ATP binding. Lysine 402 carries the post-translational modification N6-acetyllysine. A Phosphoserine modification is found at serine 420. Residue 420–424 (SYHVK) coordinates ATP. Residue cysteine 459 is the site of S-palmitoyl cysteine attachment. Residue lysine 464 forms a Glycyl lysine isopeptide (Lys-Gly) (interchain with G-Cter in SUMO); alternate linkage. A Glycyl lysine isopeptide (Lys-Gly) (interchain with G-Cter in ubiquitin); alternate cross-link involves residue lysine 464. Lysine 491 bears the N6-methyllysine mark.

The protein belongs to the mab-21 family. As to quaternary structure, monomer in the absence of DNA. Homodimer in presence of dsDNA: forms a 2:2 dimer with two enzymes binding to two DNA molecules. Interacts with nucleosomes; interaction is mainly mediated via histones H2A and H2B and inactivates the nucleotidyltransferase activity by blocking DNA-binding and subsequent activation. Interacts with PQBP1 (via WW domain). Interacts with TRIM14; this interaction recruits USP14, leading to deubiquitinate and stabilize CGAS and promote type I interferon production. Interacts with ZCCHC3; promoting sensing of dsDNA by CGAS. Interacts (when not monomethylated) with (poly-ADP-ribosylated) PARP1; interaction takes place in the nucleus and prevents the formation of the PARP1-TIMELESS complex. Interacts (when monomethylated) with SGF29; interaction with SGF29 prevents interaction with PARP1. Interacts with PCBP2; preventing the formation of liquid-like droplets in which CGAS is activated. Interacts with Irgm1; promoting CGAS degradation. Interacts with DDX41. It depends on Mg(2+) as a cofactor. Requires Mn(2+) as cofactor. Zn(2+) is required as a cofactor. In terms of processing, the N-terminal disordered part (1-146) is phosphorylated by AURKB during the G2-M transition, blocking CGAS liquid phase separation and preventing activation. Phosphorylation at Tyr-201 by BLK promotes cytosolic retention. Localizes into the nucleus following dephosphorylation at Tyr-201. Phosphorylation at Ser-420 activates the nucleotidyltransferase activity. Dephosphorylation at Ser-420 by PPP6C impairs its ability to bind GTP, thereby inactivating it. Phosphorylation at Thr-52 and Ser-199 by PRKDC inhibits its cyclic GMP-AMP synthase activity by impairing homodimerization and activation. Phosphorylation at Ser-291 by AKT (AKT1, AKT2 or AKT3) suppresses the nucleotidyltransferase activity. Phosphorylation at Ser-291 by CDK1 during mitosis leads to its inhibition, thereby preventing CGAS activation by self-DNA during mitosis. Dephosphorylated at Ser-291 by protein phosphatase PP1 upon mitotic exit. Ubiquitinated at Lys-402 via 'Lys-48'-linked polyubiquitin chains, leading to its SQSTM1-mediated autophagic degradation. Interaction with TRIM14 promotes recruitment of USP14, leading to deubiquitinate Lys-402 and stabilize CGAS. Ubiquitinated at Lys-372 by RNF185 via 'Lys-27'-linked polyubiquitination, promoting CGAS cyclic GMP-AMP synthase activity. Monoubiquitination at Lys-335 by TRIM56 promotes oligomerization and subsequent activation. Monoubiquitination by TRIM41 promotes CGAS activation. Ubiquitination at Lys-271 and Lys-464 via 'Lys-48'-linked polyubiquitination promotes its degradation. Deubiquitination at Lys-271 by USP29 promotes its stabilization. Deubiquitinated by USP27X, promoting its stabilization. Ubiquitinated at Lys-399 via 'Lys-63'-linked polyubiquitin chains by MARCHF8, leading to the inhibition of its DNA binding ability. In cycling cells, nucleosome-bound CGAS is ubiquitinated at Lys-409 and Lys-410 via 'Lys-48'-linked polyubiquitin chains by the ECS(SPSB3) complex, leading to its degradation: ubiquitination and degradation of nuclear CGAS during G1 and G2 phases is required to promote low intranuclear CGAS abundance before the next mitotic cycle. Post-translationally, sumoylated at Lys-217 and Lys-464 by TRIM38 in uninfected cells and during the early phase of viral infection, promoting its stability by preventing ubiquitination at Lys-271 and Lys-464, and subsequent degradation. Desumoylated by SENP2 during the late phase of viral infection. Sumoylation at Lys-335, Lys-372 and Lys-382 prevents DNA-binding, oligomerization and nucleotidyltransferase activity. Desumoylation at Lys-335, Lys-372 and Lys-382 by SENP7 relieves inhibition and activates CGAS. In terms of processing, polyglutamylated by TTLL6 at Glu-272, leading to impair DNA-binding activity. Monoglutamylated at Glu-302 by TTLL4, leading to impair the nucleotidyltransferase activity. Deglutamylated by AGBL5/CCP5 and AGBL6/CCP6. Acetylation at Lys-372, Lys-382 and Lys-402 inhibits the cyclic GMP-AMP synthase activity. Deacetylated upon cytosolic DNA challenge such as viral infections. Acetylation by KAT5 increases the cyclic GMP-AMP synthase activity by promoting DNA-binding and subsequent activation. Post-translationally, proteolytically cleaved by apoptotic caspases during apoptosis, leading to its inactivation. The damage of the nucleus and the mitochondria during apoptosis leads to leakage of nuclear and mitochondrial DNA, which activate CGAS: cleavage and inactivation during apoptosis in required to prevent cytokine overproduction. Cleaved by CASP7 and CASP3 during virus-induced apoptosis, thereby inactivating it and preventing cytokine overproduction. Cleaved by CASP1 upon DNA virus infection; the cleavage impairs cGAMP production. Also cleaved by the pyroptotic CASP4 during non-canonical inflammasome activation; does not cut at the same sites than CASP1. In terms of processing, degraded via selective autophagy following interaction with Irgm1. Irgm1 promotes CGAS recruitment to autophagosome membranes, promoting its SQSTM1/p62-dependent autophagic degradation. Poly-ADP-ribosylation at Glu-176 by PARP1 impairs DNA-binding, thereby preventing the cyclic GMP-AMP synthase activity. Post-translationally, palmitoylation at Cys-459 by ZDHHC18 impairs DNA-binding, thereby preventing the cyclic GMP-AMP synthase activity. Palmitoylation at Cys-392 and Cys-393 by ZDHHC9 promotes homodimerization and cyclic GMP-AMP synthase activity. Depalmitoylation at Cys-392 and Cys-393 by LYPLAL1 impairs homodimerization and cyclic GMP-AMP synthase activity. In terms of processing, monomethylated at Lys-491 by SETD7. Monomethylation promotes interaction with SGF29, preventing interaction between PARP1 nad SGF29. Demethylation by RIOX1 promotes interaction with PARP1, followed by PARP1 inactivation. Lactylation by AARS2 prevents ability to undergo liquid-liquid phase separation (LLPS), thereby inhibiting CGAS activation.

It is found in the nucleus. The protein localises to the chromosome. It localises to the cell membrane. The protein resides in the cytoplasm. Its subcellular location is the cytosol. The enzyme catalyses GTP + ATP = 2',3'-cGAMP + 2 diphosphate. It catalyses the reaction GTP + ATP = pppGp(2'-5')A + diphosphate. The catalysed reaction is pppGp(2'-5')A = 2',3'-cGAMP + diphosphate. Its activity is regulated as follows. The enzyme activity is strongly increased by double-stranded DNA (dsDNA), but not by single-stranded DNA or RNA. DNA-binding induces the formation of liquid-like droplets in which CGAS is activated. Liquid-like droplets also create a selective environment that restricts entry of negative regulators, such as TREX1 or BANF1/BAF, allowing sensing of DNA. A number of mechanisms exist to restrict its activity toward self-DNA. The nucleotidyltransferase activity is inhibited in the nucleus via its association with nucleosomes: interacts with the acidic patch of histones H2A and H2B, thereby blocking DNA-binding and subsequent activation. CGAS is also inactive when associated with mitotic chromatin. Chromatin-bound CGAS cannot be activated by exogenous DNA in mitotic cells: phosphorylation of the N-terminal disordered part by AURKB during the G2-M transition blocks CGAS liquid phase separation and activation. Activity toward self-DNA is inhibited by BANF1/BAF upon acute loss of nuclear membrane integrity: BANF1/BAF acts by outcompeting CGAS for DNA-binding, thereby preventing CGAS activation. DNA-induced activation at micronuclei is also limited by TREX1, which degrades micronuclear DNA upon nuclear envelope rupture, thereby preventing CGAS activation. CGAS can be released from nucleosomes and activated by MRE11 component of the MRN complex, which displaces CGAS from acidic-patch-mediated sequestration. Acetylation at Lys-372, Lys-382 and Lys-402 inhibits the cyclic GMP-AMP synthase activity. Acetylation by KAT5 increases the cyclic GMP-AMP synthase activity by promoting DNA-binding and subsequent activation. Phosphorylation at Ser-291 suppresses the nucleotidyltransferase activity. Phosphorylation at Ser-420 promotes the cyclic GMP-AMP synthase activity. Phosphorylation at Thr-52 and Ser-199 inhibits its cyclic GMP-AMP synthase activity. Ubiquitination at Lys-372 via 'Lys-27'-linked polyubiquitination enhances the cyclic GMP-AMP synthase activity. Monoubiquitination at Lys-335 promotes oligomerization and subsequent activation. Sumoylation at Lys-335, Lys-372 and Lys-382 prevents DNA-binding, oligomerization and nucleotidyltransferase activity. The enzyme activity is impaired by the cleavage by CASP1. In addition to DNA, also activated by collided ribosomes upon translation stress: specifically binds collided ribosomes, promoting its activation and triggering type-I interferon production. In hematopoietic stem cells, binding to circular RNA cia-cGAS inhibits the cyclic GMP-AMP synthase activity. Strongly inhibited by compound RU.521, which is specific for mouse protein. In terms of biological role, nucleotidyltransferase that catalyzes the formation of cyclic GMP-AMP (2',3'-cGAMP) from ATP and GTP and plays a key role in innate immunity. Catalysis involves both the formation of a 2',5' phosphodiester linkage at the GpA step and the formation of a 3',5' phosphodiester linkage at the ApG step, producing c[G(2',5')pA(3',5')p]. Acts as a key DNA sensor: directly binds double-stranded DNA (dsDNA), inducing the formation of liquid-like droplets in which CGAS is activated, leading to synthesis of 2',3'-cGAMP, a second messenger that binds to and activates STING1, thereby triggering type-I interferon production. Preferentially binds long dsDNA (around 45 bp) and forms ladder-like networks that function cooperatively to stabilize individual cGAS-dsDNA complexes. Acts as a key foreign DNA sensor, the presence of double-stranded DNA (dsDNA) in the cytoplasm being a danger signal that triggers the immune responses. Has antiviral activity by sensing the presence of dsDNA from DNA viruses in the cytoplasm. Also acts as an innate immune sensor of infection by retroviruses by detecting the presence of reverse-transcribed DNA in the cytosol. Detection of retroviral reverse-transcribed DNA in the cytosol may be indirect and be mediated via interaction with PQBP1, which directly binds reverse-transcribed retroviral DNA. Also detects the presence of DNA from bacteria. 2',3'-cGAMP can be transferred from producing cells to neighboring cells through gap junctions, leading to promote STING1 activation and convey immune response to connecting cells. 2',3'-cGAMP can also be transferred between cells by virtue of packaging within viral particles contributing to IFN-induction in newly infected cells in a cGAS-independent but STING1-dependent manner. Also senses the presence of neutrophil extracellular traps (NETs) that are translocated to the cytosol following phagocytosis, leading to synthesis of 2',3'-cGAMP. In addition to foreign DNA, can also be activated by endogenous nuclear or mitochondrial DNA. When self-DNA leaks into the cytosol during cellular stress (such as mitochondrial stress, DNA damage, mitotic arrest or senescence), or is present in form of cytosolic micronuclei, CGAS is activated leading to a state of sterile inflammation. Acts as a regulator of cellular senescence by binding to cytosolic chromatin fragments that are present in senescent cells, leading to trigger type-I interferon production via STING1 and promote cellular senescence. Also involved in the inflammatory response to genome instability and double-stranded DNA breaks: acts by localizing to micronuclei arising from genome instability. Micronuclei, which as frequently found in cancer cells, consist of chromatin surrounded by its own nuclear membrane: following breakdown of the micronuclear envelope, a process associated with chromothripsis, CGAS binds self-DNA exposed to the cytosol, leading to 2',3'-cGAMP synthesis and subsequent activation of STING1 and type-I interferon production. In a healthy cell, CGAS is however kept inactive even in cellular events that directly expose it to self-DNA, such as mitosis, when cGAS associates with chromatin directly after nuclear envelope breakdown or remains in the form of postmitotic persistent nuclear cGAS pools bound to chromatin. Nuclear CGAS is inactivated by chromatin via direct interaction with nucleosomes, which block CGAS from DNA binding and thus prevent CGAS-induced autoimmunity. Also acts as a suppressor of DNA repair in response to DNA damage: inhibits homologous recombination repair by interacting with PARP1, the CGAS-PARP1 interaction leading to impede the formation of the PARP1-TIMELESS complex. In addition to DNA, also sense translation stress: in response to translation stress, translocates to the cytosol and associates with collided ribosomes, promoting its activation and triggering type-I interferon production. The sequence is that of Cyclic GMP-AMP synthase from Mus musculus (Mouse).